Here is a 130-residue protein sequence, read N- to C-terminus: Probable 4-amino-4-deoxy-L-arabinose-phosphoundecaprenol flippase subunit ArnF (130 aa).

Residues 1–4 (MRGY) lie on the Cytoplasmic side of the membrane. The chain crosses the membrane as a helical span at residues 5–25 (AWGAASVLLVTLAQLLMKWGM). Residues 26–47 (AQIPLMSFADVTLNLFMQYWLP) lie on the Periplasmic side of the membrane. Residues 48–68 (LVVVSGGIFGYALSMLCWFFA) form a helical membrane-spanning segment. At 69–77 (LHHLPLNRA) the chain is on the cytoplasmic side. The helical transmembrane segment at 78–98 (YPLLSVSYALVYLAAVILPWF) threads the bilayer. A topological domain (periplasmic) is located at residue asparagine 99. The chain crosses the membrane as a helical span at residues 100–120 (ESATLLKTLGTLFILFGVWLI). The Cytoplasmic portion of the chain corresponds to 121 to 130 (NSQAKVKTPQ).

It belongs to the ArnF family. In terms of assembly, heterodimer of ArnE and ArnF.

The protein resides in the cell inner membrane. It functions in the pathway bacterial outer membrane biogenesis; lipopolysaccharide biosynthesis. Its function is as follows. Translocates 4-amino-4-deoxy-L-arabinose-phosphoundecaprenol (alpha-L-Ara4N-phosphoundecaprenol) from the cytoplasmic to the periplasmic side of the inner membrane. This Serratia proteamaculans (strain 568) protein is Probable 4-amino-4-deoxy-L-arabinose-phosphoundecaprenol flippase subunit ArnF.